The following is a 76-amino-acid chain: UPF0248 protein MmarC7_1289 (76 aa).

Belongs to the UPF0248 family.

The chain is UPF0248 protein MmarC7_1289 from Methanococcus maripaludis (strain C7 / ATCC BAA-1331).